A 466-amino-acid polypeptide reads, in one-letter code: DNA repair protein RadA (466 aa).

The segment at 12 to 29 (CSECQHVAPKWVGRCANC) adopts a C4-type zinc-finger fold. 100–107 (GDPGVGKS) contributes to the ATP binding site. The RadA KNRFG motif motif lies at 261 to 265 (KNRFG). The interval 359–466 (DLYLSTVGGM…MREIAIAGAQ (108 aa)) is lon-protease-like.

Belongs to the RecA family. RadA subfamily. Interacts with DisA.

In terms of biological role, DNA-dependent ATPase involved in processing of recombination intermediates, plays a role in repairing DNA breaks. Stimulates the branch migration of RecA-mediated strand transfer reactions, allowing the 3' invading strand to extend heteroduplex DNA faster. Binds ssDNA in the presence of ADP but not other nucleotides, has ATPase activity that is stimulated by ssDNA and various branched DNA structures, but inhibited by SSB. Does not have RecA's homology-searching function. Also inhibits the diadenylate cyclase activity of DisA. The sequence is that of DNA repair protein RadA from Mycolicibacterium smegmatis (strain ATCC 700084 / mc(2)155) (Mycobacterium smegmatis).